A 1081-amino-acid chain; its full sequence is Zinc finger protein 827 (1081 aa).

Residues 1–10 show a composition bias toward basic and acidic residues; the sequence is MPRRKQEQPK. The interval 1-14 is mediates direct interaction with RBBP4; the sequence is MPRRKQEQPKRLPS. A disordered region spans residues 1-77; it reads MPRRKQEQPK…DTSLGSTTPS (77 aa). The RRK motif; mediates NuRD recruitment to telomeres motif lies at 3–5; that stretch reads RRK. Residues 62 to 77 are compositionally biased toward polar residues; sequence EQSTSPDTSLGSTTPS. Residues Lys-176, Lys-216, and Lys-226 each participate in a glycyl lysine isopeptide (Lys-Gly) (interchain with G-Cter in SUMO2) cross-link. Disordered stretches follow at residues 259 to 278 and 307 to 348; these read KVSE…ASSF and SSLL…SLEL. Positions 327–344 are enriched in pro residues; that stretch reads VTPPPPPPPPPPPPPPPQ. Residues Lys-360 and Lys-372 each participate in a glycyl lysine isopeptide (Lys-Gly) (interchain with G-Cter in SUMO2) cross-link. 3 C2H2-type zinc fingers span residues 374 to 396, 402 to 424, and 433 to 455; these read FQCP…MVIH, HQCP…MKVH, and FQCQ…MRCH. Residues Lys-466, Lys-475, Lys-523, Lys-549, Lys-580, Lys-587, Lys-597, Lys-634, Lys-639, and Lys-658 each participate in a glycyl lysine isopeptide (Lys-Gly) (interchain with G-Cter in SUMO2) cross-link. Residue Lys-673 forms a Glycyl lysine isopeptide (Lys-Gly) (interchain with G-Cter in SUMO1); alternate linkage. Residue Lys-673 forms a Glycyl lysine isopeptide (Lys-Gly) (interchain with G-Cter in SUMO2); alternate linkage. Glycyl lysine isopeptide (Lys-Gly) (interchain with G-Cter in SUMO2) cross-links involve residues Lys-704, Lys-710, Lys-742, Lys-778, and Lys-798. 2 C2H2-type zinc fingers span residues 817 to 839 and 845 to 867; these read FPCD…LSLH and YKCH…LTVH. Glycyl lysine isopeptide (Lys-Gly) (interchain with G-Cter in SUMO2) cross-links involve residues Lys-870 and Lys-891. 2 C2H2-type zinc fingers span residues 897 to 919 and 929 to 952; these read YSCH…MSLH and ICCT…GTKH. The span at 947 to 960 shows a compositional bias: basic and acidic residues; it reads HIGTKHTGEDRKTP. Residues 947–996 form a disordered region; it reads HIGTKHTGEDRKTPSESNSPSSSSLSALSDSANSKDDSDGSQKNKGGNNL. A Glycyl lysine isopeptide (Lys-Gly) (interchain with G-Cter in SUMO2) cross-link involves residue Lys-958. A compositionally biased stretch (low complexity) spans 961-978; that stretch reads SESNSPSSSSLSALSDSA. Residues 979-988 show a composition bias toward basic and acidic residues; sequence NSKDDSDGSQ. Residue Lys-1014 forms a Glycyl lysine isopeptide (Lys-Gly) (interchain with G-Cter in SUMO2) linkage. C2H2-type zinc fingers lie at residues 1019 to 1041 and 1047 to 1069; these read FECV…LQIH and FECD…KKCH.

It belongs to the krueppel C2H2-type zinc-finger protein family. As to quaternary structure, part of a transcription inhibitory ribonucleoprotein complex composed at least of the circular RNA circZNF827, HNRNPK and HNRNPL. Interacts with the nucleosome remodeling and histone deacetylase/NuRD complex. Interacts with RBBP4; the interaction is direct and recruits RBBP4, a component of the NuRD complex, to telomeres.

It is found in the nucleus. Its subcellular location is the chromosome. The protein resides in the telomere. Its function is as follows. As part of a ribonucleoprotein complex composed at least of HNRNPK, HNRNPL and the circular RNA circZNF827 that nucleates the complex on chromatin, may negatively regulate the transcription of genes involved in neuronal differentiation. Could also recruit the nucleosome remodeling and histone deacetylase/NuRD complex to telomeric regions of chromosomes to regulate chromatin remodeling as part of telomere maintenance. The chain is Zinc finger protein 827 (ZNF827) from Homo sapiens (Human).